The chain runs to 359 residues: Cysteine/Cysteine sulfinic acid decarboxylase (359 aa).

In the N-terminal section; belongs to the HFCD (homo-oligomeric flavin containing Cys decarboxylase) superfamily. This sequence in the C-terminal section; belongs to the PPC synthetase family.

The enzyme catalyses L-cysteine + H(+) = cysteamine + CO2. It carries out the reaction 3-sulfino-L-alanine + H(+) = hypotaurine + CO2. Slightly stimulated in the presence of 1 mM Mg(2+). Its function is as follows. Catalyzes the decarboxylation of L-cysteine to cysteamine and of 3-sulfino-L-alanine (cysteine sulfinic acid) to hypotaurine. Also catalyzes the decarboxylation of various amino acids such as L-lysine, L-glutamate, L-asparaginate and L-proline. In vitro, shows highest activity with L-cysteine as substrate. The chain is Cysteine/Cysteine sulfinic acid decarboxylase from Unknown prokaryotic organism.